Consider the following 139-residue polypeptide: Large ribosomal subunit protein bL20 (139 aa).

Belongs to the bacterial ribosomal protein bL20 family.

Its function is as follows. Binds directly to 23S ribosomal RNA and is necessary for the in vitro assembly process of the 50S ribosomal subunit. It is not involved in the protein synthesizing functions of that subunit. The sequence is that of Large ribosomal subunit protein bL20 from Leuconostoc citreum (strain KM20).